The primary structure comprises 247 residues: tRNA pseudouridine synthase A (247 aa).

D53 (nucleophile) is an active-site residue. Substrate is bound at residue Y112.

It belongs to the tRNA pseudouridine synthase TruA family. As to quaternary structure, homodimer.

The enzyme catalyses uridine(38/39/40) in tRNA = pseudouridine(38/39/40) in tRNA. Its function is as follows. Formation of pseudouridine at positions 38, 39 and 40 in the anticodon stem and loop of transfer RNAs. The chain is tRNA pseudouridine synthase A from Anaplasma marginale (strain Florida).